A 235-amino-acid polypeptide reads, in one-letter code: Mediator of RNA polymerase II transcription subunit 7 (235 aa).

Belongs to the Mediator complex subunit 7 family. As to quaternary structure, component of the Mediator complex.

The protein resides in the nucleus. Its function is as follows. Component of the Mediator complex, a coactivator involved in the regulated transcription of nearly all RNA polymerase II-dependent genes. Mediator functions as a bridge to convey information from gene-specific regulatory proteins to the basal RNA polymerase II transcription machinery. Mediator is recruited to promoters by direct interactions with regulatory proteins and serves as a scaffold for the assembly of a functional preinitiation complex with RNA polymerase II and the general transcription factors. This chain is Mediator of RNA polymerase II transcription subunit 7 (MED7), found in Yarrowia lipolytica (strain CLIB 122 / E 150) (Yeast).